The sequence spans 141 residues: Large ribosomal subunit protein uL11 (141 aa).

The protein belongs to the universal ribosomal protein uL11 family. Part of the ribosomal stalk of the 50S ribosomal subunit. Interacts with L10 and the large rRNA to form the base of the stalk. L10 forms an elongated spine to which L12 dimers bind in a sequential fashion forming a multimeric L10(L12)X complex. In terms of processing, one or more lysine residues are methylated.

Its function is as follows. Forms part of the ribosomal stalk which helps the ribosome interact with GTP-bound translation factors. This Petrotoga mobilis (strain DSM 10674 / SJ95) protein is Large ribosomal subunit protein uL11.